The chain runs to 205 residues: Outer-membrane lipoprotein LolB (205 aa).

Positions 1-17 (MFLRHCITFTLIALLAG) are cleaved as a signal peptide. Cys18 carries the N-palmitoyl cysteine lipid modification. Cys18 carries S-diacylglycerol cysteine lipidation.

It belongs to the LolB family. In terms of assembly, monomer.

The protein resides in the cell outer membrane. Plays a critical role in the incorporation of lipoproteins in the outer membrane after they are released by the LolA protein. This chain is Outer-membrane lipoprotein LolB, found in Pseudomonas putida (strain GB-1).